The sequence spans 78 residues: Beta-defensin 12 (78 aa).

Residues M1–A27 form the signal peptide. Disulfide bonds link C46-C73, C53-C67, and C57-C74.

It belongs to the beta-defensin family.

The protein resides in the secreted. Has antibacterial activity. In Rattus norvegicus (Rat), this protein is Beta-defensin 12 (Defb12).